The following is a 627-amino-acid chain: Probable inactive L-type lectin-domain containing receptor kinase III.1 (627 aa).

The N-terminal stretch at 1–23 is a signal peptide; that stretch reads MITFKSIALTIIFLSYFVSCVSS. Residues 24-303 are Extracellular-facing; that stretch reads QRETKFLNHG…STEKKSNNTM (280 aa). Residues 26 to 262 form a legume-lectin like region; sequence ETKFLNHGFL…SHFVLGWSFN (237 aa). Asn57, Asn78, Asn127, Asn184, Asn202, Asn209, and Asn230 each carry an N-linked (GlcNAc...) asparagine glycan. Positions 272–297 are disordered; it reads ITKLPSLPDPPPTLSPSPSPPVSTEK. Over residues 278 to 292 the composition is skewed to pro residues; that stretch reads LPDPPPTLSPSPSPP. Residue Asn300 is glycosylated (N-linked (GlcNAc...) asparagine). Residues 304–324 traverse the membrane as a helical segment; the sequence is LIIIVAASATVALMILIFSGF. Residues 325–627 are Cytoplasmic-facing; that stretch reads WFLRRDKIFF…PHDDYLFYGV (303 aa). Positions 353 to 623 constitute a Protein kinase domain; sequence FDNSKLLGER…TEALPHDDYL (271 aa). Residues 359 to 367 and Lys381 contribute to the ATP site; that span reads LGERNSGSF.

In the C-terminal section; belongs to the protein kinase superfamily. Ser/Thr protein kinase family. It in the N-terminal section; belongs to the leguminous lectin family.

It localises to the cell membrane. The sequence is that of Probable inactive L-type lectin-domain containing receptor kinase III.1 (LECRK31) from Arabidopsis thaliana (Mouse-ear cress).